Here is a 339-residue protein sequence, read N- to C-terminus: Serine/threonine-protein kinase SAPK2 (339 aa).

Residues 4 to 260 (YEVIKDIGSG…IPEIKNHPWF (257 aa)) enclose the Protein kinase domain. Residues 10 to 18 (IGSGNFGVA) and Lys-33 each bind ATP. The active-site Proton acceptor is Asp-123. Positions 253-339 (EIKNHPWFLK…EDSGDFVCAL (87 aa)) are C-terminal.

This sequence belongs to the protein kinase superfamily. Ser/Thr protein kinase family. Phosphorylated.

The enzyme catalyses L-seryl-[protein] + ATP = O-phospho-L-seryl-[protein] + ADP + H(+). It catalyses the reaction L-threonyl-[protein] + ATP = O-phospho-L-threonyl-[protein] + ADP + H(+). May play a role in signal transduction of hyperosmotic response. Can phosphorylate BZIP46 in vitro. The protein is Serine/threonine-protein kinase SAPK2 (SAPK2) of Oryza sativa subsp. indica (Rice).